A 509-amino-acid polypeptide reads, in one-letter code: Histidine--tRNA ligase, cytoplasmic (509 aa).

Ala2 carries the N-acetylalanine modification. In terms of domain architecture, WHEP-TRS spans 3-59 (ERAALEELVKLQGERVRGLKQQKASAELIEEEVAKLLKLKAQLGPDESKQKFVLKTP). A Phosphoserine modification is found at Ser66. Residues 130–132 (DLT), Arg157, Gln173, Asp177, Arg326, and 330–331 (YY) each bind L-histidine. Ser356 is subject to Phosphoserine.

Belongs to the class-II aminoacyl-tRNA synthetase family. In terms of assembly, homodimer.

The protein resides in the cytoplasm. The catalysed reaction is tRNA(His) + L-histidine + ATP = L-histidyl-tRNA(His) + AMP + diphosphate + H(+). Functionally, catalyzes the ATP-dependent ligation of histidine to the 3'-end of its cognate tRNA, via the formation of an aminoacyl-adenylate intermediate (His-AMP). Plays a role in axon guidance. In Pongo abelii (Sumatran orangutan), this protein is Histidine--tRNA ligase, cytoplasmic (HARS1).